Here is a 546-residue protein sequence, read N- to C-terminus: Type II methyltransferase M.XhoI (546 aa).

The protein belongs to the N(4)/N(6)-methyltransferase family.

The catalysed reaction is a 2'-deoxyadenosine in DNA + S-adenosyl-L-methionine = an N(6)-methyl-2'-deoxyadenosine in DNA + S-adenosyl-L-homocysteine + H(+). Functionally, a gamma subtype methylase, recognizes the double-stranded sequence 5'-CTCGAG-3', methylates A-5 on both strands, and protects the DNA from cleavage by the XhoI endonuclease. The polypeptide is Type II methyltransferase M.XhoI (Xanthomonas vasicola).